Reading from the N-terminus, the 493-residue chain is CBL-interacting protein kinase 26 (493 aa).

The 255-residue stretch at 12–266 folds into the Protein kinase domain; that stretch reads YEIGRQLGQG…IPKIKRSAWY (255 aa). Residues 18–26 and lysine 41 contribute to the ATP site; that span reads LGQGNFAKV. Catalysis depends on aspartate 134, which acts as the Proton acceptor. The tract at residues 152-181 is activation loop; the sequence is DFGLSALSESKRHDGLLHTTCGTPAYVAPE. A disordered region spans residues 311 to 332; the sequence is KVYTNGEATTSDSPECSNSDGK. Over residues 316–332 the composition is skewed to polar residues; it reads GEATTSDSPECSNSDGK. One can recognise an NAF domain in the interval 320–360; that stretch reads TSDSPECSNSDGKQASLSLPNLNAFDIISLSTGFDLSNLFE. Residues 365–394 are PPI; it reads RREERFTTRQPAAAIFAKLNELARRFKLKI. Residues 465–493 form a disordered region; the sequence is GQHQQPEQSMQGMQGEQQPSRLPSQQPQG.

This sequence belongs to the protein kinase superfamily. CAMK Ser/Thr protein kinase family. SNF1 subfamily. Mn(2+) is required as a cofactor.

It carries out the reaction L-seryl-[protein] + ATP = O-phospho-L-seryl-[protein] + ADP + H(+). It catalyses the reaction L-threonyl-[protein] + ATP = O-phospho-L-threonyl-[protein] + ADP + H(+). In terms of biological role, CIPK serine-threonine protein kinases interact with CBL proteins. Binding of a CBL protein to the regulatory NAF domain of CIPK protein lead to the activation of the kinase in a calcium-dependent manner. In Oryza sativa subsp. japonica (Rice), this protein is CBL-interacting protein kinase 26 (CIPK26).